Here is a 217-residue protein sequence, read N- to C-terminus: Protein-L-isoaspartate O-methyltransferase (217 aa).

Ser-65 is a catalytic residue.

The protein belongs to the methyltransferase superfamily. L-isoaspartyl/D-aspartyl protein methyltransferase family.

It is found in the cytoplasm. It catalyses the reaction [protein]-L-isoaspartate + S-adenosyl-L-methionine = [protein]-L-isoaspartate alpha-methyl ester + S-adenosyl-L-homocysteine. Catalyzes the methyl esterification of L-isoaspartyl residues in peptides and proteins that result from spontaneous decomposition of normal L-aspartyl and L-asparaginyl residues. It plays a role in the repair and/or degradation of damaged proteins. This is Protein-L-isoaspartate O-methyltransferase from Methanoregula boonei (strain DSM 21154 / JCM 14090 / 6A8).